A 258-amino-acid chain; its full sequence is Type III pantothenate kinase (258 aa).

Residue 6–13 participates in ATP binding; sequence DVGNTNIV. Residues Tyr-100 and 107-110 contribute to the substrate site; that span reads GADR. Asp-109 serves as the catalytic Proton acceptor. Asp-129 lines the K(+) pocket. Thr-132 is a binding site for ATP. A substrate-binding site is contributed by Thr-184.

It belongs to the type III pantothenate kinase family. Homodimer. It depends on NH4(+) as a cofactor. The cofactor is K(+).

It localises to the cytoplasm. The enzyme catalyses (R)-pantothenate + ATP = (R)-4'-phosphopantothenate + ADP + H(+). Its pathway is cofactor biosynthesis; coenzyme A biosynthesis; CoA from (R)-pantothenate: step 1/5. In terms of biological role, catalyzes the phosphorylation of pantothenate (Pan), the first step in CoA biosynthesis. The sequence is that of Type III pantothenate kinase from Clostridium botulinum (strain Kyoto / Type A2).